The following is a 166-amino-acid chain: Glycine cleavage system H protein 3, mitochondrial (166 aa).

A mitochondrion-targeting transit peptide spans 1 to 35 (MALRMWASSTANALKLSSSASKSHLLPAFSISRCF). A Lipoyl-binding domain is found at 57–139 (VATIGITDHA…YEDGWMIKVK (83 aa)). Residue lysine 98 is modified to N6-lipoyllysine. A Phosphoserine modification is found at serine 141.

This sequence belongs to the GcvH family. In terms of assembly, the glycine cleavage system is composed of four proteins: P, T, L and H. (R)-lipoate is required as a cofactor. S-nitrosylated and/or glutathionylated at unknown positions in response to nitric oxide.

It localises to the mitochondrion. With respect to regulation, inhibited by harpin, S-nitrosoglutathione (GSNO), nitric oxide, N-ethylmaleimide and 5,5'-dithiobis-(2-nitrobenzoic acid). Functionally, the glycine decarboxylase (GDC) or glycine cleavage system catalyzes the degradation of glycine. The H protein shuttles the methylamine group of glycine from the P protein to the T protein. This is Glycine cleavage system H protein 3, mitochondrial (GDH3) from Arabidopsis thaliana (Mouse-ear cress).